A 626-amino-acid polypeptide reads, in one-letter code: Division abnormally delayed protein (626 aa).

The signal sequence occupies residues 1–26 (MAARSVRLAQLLLFTLLCGFVGLSAA). Residues 41 to 52 (LHSATTHHRRRL) show a composition bias toward basic residues. A disordered region spans residues 41–65 (LHSATTHHRRRLQRDSRAKDAVGGS). Asn97 is a glycosylation site (N-linked (GlcNAc...) asparagine; atypical). N-linked (GlcNAc...) asparagine glycosylation is found at Asn101, Asn150, and Asn187. The disordered stretch occupies residues 533–607 (NSIQATHDIQ…GKTSGSNPLE (75 aa)). O-linked (Xyl...) (heparan sulfate) serine glycans are attached at residues Ser549, Ser569, Ser573, and Ser601. The span at 565-575 (GAHGSGDGSGD) shows a compositional bias: gly residues. Gly602 is lipidated: GPI-anchor amidated glycine. A propeptide spans 603 to 626 (SNPLEGTATWMLLTLVTMLFSSCS) (removed in mature form).

It belongs to the glypican family. As to quaternary structure, interacts with nord; the interaction promotes dally degradation. Interacts with Magu. As part of the dally/ Magu complex, associates with fwe (isoforms ubi, LoseA and LoseB) and is unable to interact with fwe independently of Magu.

The protein localises to the cell membrane. Cell surface proteoglycan that bears heparan sulfate. Functions as a coreceptor for growth factors and morphogens, such as the products of dpp, to regulate signaling and distribution of these ligands. Required for cell division patterning during postembryonic development of the nervous system. Plays a role in dpp/BMP signaling possibly by stabilizing dpp and thereby creating a morphological gradient during wing development. Might have a role in testis development. Functions with magu and fwe in a mechanism of scaling, which utilises apoptosis to ensure that the dpp patterning gradient remains proportional to the size of the growing wing. In this mechanism, fwe represses dally and Magu-dependent activity in expanding the gradient, and dally/Magu inhibits fwe-dependent apoptosis to keep cell death rate low. When the levels of these different proteins are optimally regulated the gradient correctly scales with organ growth but when this fails, fwe-mediated apoptosis is activated to trim the developing tissue to match the correct size of the gradient. In Drosophila melanogaster (Fruit fly), this protein is Division abnormally delayed protein (dally).